Here is a 327-residue protein sequence, read N- to C-terminus: Lipoyl synthase (327 aa).

[4Fe-4S] cluster-binding residues include Cys66, Cys71, Cys77, Cys92, Cys96, Cys99, and Ser306. Residues 78–295 (FSKGTATFMI…EKEAYELGFS (218 aa)) enclose the Radical SAM core domain.

The protein belongs to the radical SAM superfamily. Lipoyl synthase family. It depends on [4Fe-4S] cluster as a cofactor.

It localises to the cytoplasm. The enzyme catalyses [[Fe-S] cluster scaffold protein carrying a second [4Fe-4S](2+) cluster] + N(6)-octanoyl-L-lysyl-[protein] + 2 oxidized [2Fe-2S]-[ferredoxin] + 2 S-adenosyl-L-methionine + 4 H(+) = [[Fe-S] cluster scaffold protein] + N(6)-[(R)-dihydrolipoyl]-L-lysyl-[protein] + 4 Fe(3+) + 2 hydrogen sulfide + 2 5'-deoxyadenosine + 2 L-methionine + 2 reduced [2Fe-2S]-[ferredoxin]. Its pathway is protein modification; protein lipoylation via endogenous pathway; protein N(6)-(lipoyl)lysine from octanoyl-[acyl-carrier-protein]: step 2/2. Catalyzes the radical-mediated insertion of two sulfur atoms into the C-6 and C-8 positions of the octanoyl moiety bound to the lipoyl domains of lipoate-dependent enzymes, thereby converting the octanoylated domains into lipoylated derivatives. The protein is Lipoyl synthase of Neisseria meningitidis serogroup A / serotype 4A (strain DSM 15465 / Z2491).